Consider the following 187-residue polypeptide: Ribosome-recycling factor (187 aa).

The protein belongs to the RRF family.

The protein resides in the cytoplasm. Responsible for the release of ribosomes from messenger RNA at the termination of protein biosynthesis. May increase the efficiency of translation by recycling ribosomes from one round of translation to another. This chain is Ribosome-recycling factor, found in Paracoccus denitrificans (strain Pd 1222).